The chain runs to 545 residues: T-complex protein 1 subunit gamma (545 aa).

Position 1 is an N-acetylmethionine (Met1). The disordered stretch occupies residues 1-24 (MMGHRPVLVLSQNTKRESGRKVQS). Phosphoserine is present on Ser11. Lys15 is covalently cross-linked (Glycyl lysine isopeptide (Lys-Gly) (interchain with G-Cter in SUMO2)). ADP is bound at residue Gly42. Residue Gly42 participates in ATP binding. Asp93 provides a ligand contact to Mg(2+). ADP-binding residues include Gly94, Thr95, Thr96, Ser97, Thr162, and Lys163. ATP-binding residues include Gly94, Thr95, and Thr96. Residue Ser170 is modified to Phosphoserine. Residue Lys222 is modified to N6-acetyllysine. A phosphoserine mark is found at Ser243 and Ser244. Tyr247 is subject to Phosphotyrosine. Residues Lys248 and Lys249 each participate in a glycyl lysine isopeptide (Lys-Gly) (interchain with G-Cter in SUMO2) cross-link. The residue at position 252 (Ser252) is a Phosphoserine. A disulfide bridge connects residues Cys366 and Cys372. A Glycyl lysine isopeptide (Lys-Gly) (interchain with G-Cter in SUMO2) cross-link involves residue Lys381. Gly411 contacts ADP. Gly411 is an ATP binding site. Thr430 and Thr459 each carry phosphothreonine. Residues Gly482, Glu483, Glu497, and Lys502 each coordinate ADP. Position 482 (Gly482) interacts with ATP. Glu497 provides a ligand contact to ATP. The disordered stretch occupies residues 526-545 (HKKKGDDQSRQGGAPDAGQE).

Belongs to the TCP-1 chaperonin family. In terms of assembly, component of the chaperonin-containing T-complex (TRiC), a hexadecamer composed of two identical back-to-back stacked rings enclosing a protein folding chamber. Each ring is made up of eight different subunits: TCP1/CCT1, CCT2, CCT3, CCT4, CCT5, CCT6A/CCT6, CCT7, CCT8. Interacts with PACRG. Interacts with DNAAF4. Interacts with DLEC1.

Its subcellular location is the cytoplasm. It carries out the reaction ATP + H2O = ADP + phosphate + H(+). In terms of biological role, component of the chaperonin-containing T-complex (TRiC), a molecular chaperone complex that assists the folding of actin, tubulin and other proteins upon ATP hydrolysis. The TRiC complex mediates the folding of WRAP53/TCAB1, thereby regulating telomere maintenance. As part of the TRiC complex may play a role in the assembly of BBSome, a complex involved in ciliogenesis regulating transports vesicles to the cilia. This chain is T-complex protein 1 subunit gamma (CCT3), found in Pongo abelii (Sumatran orangutan).